The sequence spans 2051 residues: Fatty acid synthase subunit beta (2051 aa).

N-acetylmethionine is present on M1. Residues 1–468 (MDAYSTRPLT…VYDTFDGSDL (468 aa)) form an acetyltransferase region. Residue S274 is the For acetyltransferase activity of the active site. Residues 480-868 (VDCIIRLPVK…TRGVMLWKEF (389 aa)) are enoyl reductase. At T733 the chain carries Phosphothreonine. Residue S1121 is modified to Phosphoserine. The interval 1144 to 1626 (GSEINWRHAS…LPNTALKTSI (483 aa)) is dehydratase. A Glycyl lysine isopeptide (Lys-Gly) (interchain with G-Cter in ubiquitin) cross-link involves residue K1364. Positions 1523–1648 (NGSTLEQKVN…KFETRNEDDV (126 aa)) constitute a MaoC-like domain. The tract at residues 1627 to 1845 (QHVGMINGRK…MTMQVAVPRD (219 aa)) is malonyl/palmitoyl transferase. S1808 functions as the For malonyltransferase activity in the catalytic mechanism.

It belongs to the fungal fatty acid synthetase subunit beta family. [Alpha(6)beta(6)] hexamers of two multifunctional subunits (alpha and beta).

The catalysed reaction is acetyl-CoA + n malonyl-CoA + 2n NADPH + 4n H(+) = a long-chain-acyl-CoA + n CoA + n CO2 + 2n NADP(+).. The enzyme catalyses holo-[ACP] + acetyl-CoA = acetyl-[ACP] + CoA. It carries out the reaction holo-[ACP] + malonyl-CoA = malonyl-[ACP] + CoA. It catalyses the reaction a (3R)-hydroxyacyl-[ACP] = a (2E)-enoyl-[ACP] + H2O. The catalysed reaction is a 2,3-saturated acyl-[ACP] + NAD(+) = a (2E)-enoyl-[ACP] + NADH + H(+). The enzyme catalyses (9Z)-octadecenoyl-[ACP] + H2O = (9Z)-octadecenoate + holo-[ACP] + H(+). Its function is as follows. Fatty acid synthetase catalyzes the formation of long-chain fatty acids from acetyl-CoA, malonyl-CoA and NADPH. The beta subunit contains domains for: [acyl-carrier-protein] acetyltransferase and malonyltransferase, S-acyl fatty acid synthase thioesterase, enoyl-[acyl-carrier-protein] reductase, and 3-hydroxypalmitoyl-[acyl-carrier-protein] dehydratase. The polypeptide is Fatty acid synthase subunit beta (FAS1) (Saccharomyces cerevisiae (strain ATCC 204508 / S288c) (Baker's yeast)).